Reading from the N-terminus, the 635-residue chain is Dihydrolipoyllysine-residue acetyltransferase component of pyruvate dehydrogenase complex, mitochondrial (635 aa).

Positions 83–160 (GKEITMPALS…EINKPIAIIV (78 aa)) constitute a Lipoyl-binding 1 domain. At lysine 124 the chain carries N6-lipoyllysine. Positions 171–204 (KNYKPSSQASSTPVQEEAPKPKQEAPKKSTKTYP) are disordered. Polar residues predominate over residues 174–184 (KPSSQASSTPV). The segment covering 187-197 (EAPKPKQEAPK) has biased composition (basic and acidic residues). A Lipoyl-binding 2 domain is found at 206-283 (HKVVGMPALS…QINQPVCIIV (78 aa)). An N6-lipoyllysine modification is found at lysine 247. A disordered region spans residues 295 to 338 (YSVEEQSSSSSSSSQESTPSSSSSSSQESTPSQSSSQQTTRKSG). A compositionally biased stretch (low complexity) spans 298-334 (EEQSSSSSSSSQESTPSSSSSSSQESTPSQSSSQQTT). The region spanning 342-379 (FATPAARFEASSKGYDLSAINGTGPNNRILKADVLEFV) is the Peripheral subunit-binding (PSBD) domain. The disordered stretch occupies residues 382 to 413 (KQEVAQQQQQQTTTTTKKPTTPTSSGEFTDIP). Over residues 387 to 404 (QQQQQQTTTTTKKPTTPT) the composition is skewed to low complexity. A catalytic region spans residues 403-635 (PTSSGEFTDI…YVENPIKLIL (233 aa)).

It belongs to the 2-oxoacid dehydrogenase family. In terms of assembly, 20 to 30 alpha(2)-beta(2) tetramers of E1 + 6 homodimers of E3 + 60 copies of E2. The cofactor is (R)-lipoate.

The protein resides in the mitochondrion matrix. It carries out the reaction N(6)-[(R)-dihydrolipoyl]-L-lysyl-[protein] + acetyl-CoA = N(6)-[(R)-S(8)-acetyldihydrolipoyl]-L-lysyl-[protein] + CoA. Its function is as follows. The pyruvate dehydrogenase complex catalyzes the overall conversion of pyruvate to acetyl-CoA and CO(2). It contains multiple copies of three enzymatic components: pyruvate dehydrogenase (E1), dihydrolipoamide acetyltransferase (E2) and lipoamide dehydrogenase (E3). This is Dihydrolipoyllysine-residue acetyltransferase component of pyruvate dehydrogenase complex, mitochondrial (pdhC) from Dictyostelium discoideum (Social amoeba).